The primary structure comprises 212 residues: Thymidylate kinase (212 aa).

Residue 11–18 coordinates ATP; it reads GLEGAGKT.

This sequence belongs to the thymidylate kinase family.

It carries out the reaction dTMP + ATP = dTDP + ADP. Its function is as follows. Phosphorylation of dTMP to form dTDP in both de novo and salvage pathways of dTTP synthesis. In Buchnera aphidicola subsp. Schizaphis graminum (strain Sg), this protein is Thymidylate kinase.